The sequence spans 305 residues: Axin interactor, dorsalization-associated protein A (305 aa).

An axin-binding region spans residues 153–220 (GTLLPRLPSE…RKEDTYVHFN (68 aa)). Positions 156 to 303 (LPRLPSEPGM…LYLHLLQTLL (148 aa)) constitute a C2 Aida-type domain.

It belongs to the AIDA family.

In terms of biological role, acts as a ventralizing factor during embryogenesis. Inhibits axin-mediated JNK activation by binding axin and disrupting axin homodimerization. This in turn antagonizes a Wnt/beta-catenin-independent dorsalization pathway activated by axin/JNK-signaling. This is Axin interactor, dorsalization-associated protein A (aida-a) from Xenopus laevis (African clawed frog).